A 280-amino-acid polypeptide reads, in one-letter code: 3-methyl-2-oxobutanoate hydroxymethyltransferase (280 aa).

2 residues coordinate Mg(2+): Asp61 and Asp100. Residues 61 to 62, Asp100, and Lys130 contribute to the 3-methyl-2-oxobutanoate site; that span reads DS. Residue Glu132 coordinates Mg(2+). Residue Glu198 is the Proton acceptor of the active site.

It belongs to the PanB family. As to quaternary structure, homodecamer; pentamer of dimers. Mg(2+) serves as cofactor.

The protein resides in the cytoplasm. It carries out the reaction 3-methyl-2-oxobutanoate + (6R)-5,10-methylene-5,6,7,8-tetrahydrofolate + H2O = 2-dehydropantoate + (6S)-5,6,7,8-tetrahydrofolate. It participates in cofactor biosynthesis; (R)-pantothenate biosynthesis; (R)-pantoate from 3-methyl-2-oxobutanoate: step 1/2. Functionally, catalyzes the reversible reaction in which hydroxymethyl group from 5,10-methylenetetrahydrofolate is transferred onto alpha-ketoisovalerate to form ketopantoate. In Mycolicibacterium vanbaalenii (strain DSM 7251 / JCM 13017 / BCRC 16820 / KCTC 9966 / NRRL B-24157 / PYR-1) (Mycobacterium vanbaalenii), this protein is 3-methyl-2-oxobutanoate hydroxymethyltransferase.